The primary structure comprises 82 residues: uncharacterized protein (82 aa).

This protein may be involved in virus assembly. This is an uncharacterized protein from Sulfolobus spindle-shape virus 1 (SSV1).